The sequence spans 292 residues: Aquaporin PIP1-3/PIP1-4 (292 aa).

A disordered region spans residues 1–42 (MEGKEEDVRLGANKFSERQPIGTAAQGAGAGDDDKDYKEPPP). 2 helical membrane passes run 61–81 (IAEF…VMGV) and 96–118 (IAWS…SGGH). The NPA 1 motif lies at 120 to 122 (NPA). A run of 3 helical transmembrane segments spans residues 139–159 (IFYI…VKGF), 181–201 (GDGL…VFSA), and 215–235 (ILAP…TIPI). The short motif at 241-243 (NPA) is the NPA 2 element. The chain crosses the membrane as a helical span at residues 263–283 (IFWVGPFIGAALAAIYHQVII).

It belongs to the MIP/aquaporin (TC 1.A.8) family. PIP (TC 1.A.8.11) subfamily.

The protein localises to the cell membrane. Functionally, aquaporins facilitate the transport of water and small neutral solutes across cell membranes. The sequence is that of Aquaporin PIP1-3/PIP1-4 (PIP1-3) from Zea mays (Maize).